The sequence spans 431 residues: Mitochondrial distribution and morphology protein 12 (431 aa).

One can recognise an SMP-LTD domain in the interval 1-431 (MSIDLNWETL…VYPSFWTFLV (431 aa)). Disordered stretches follow at residues 68 to 153 (DFYE…GVST) and 209 to 289 (QSHT…PKPE). The span at 69 to 96 (FYEDLDDDDGGSDEDDEGSNSCQTDEEN) shows a compositional bias: acidic residues. The segment covering 97–113 (EAAKTLRERRKMDRVER) has biased composition (basic and acidic residues). The segment covering 115–129 (ANGSSNVSNPPSYTD) has biased composition (polar residues). Positions 241–252 (SASTLAVSSSTT) are enriched in low complexity.

It belongs to the MDM12 family. As to quaternary structure, component of the ER-mitochondria encounter structure (ERMES) or MDM complex, composed of mmm1, mdm10, mdm12 and mdm34. A mmm1 homodimer associates with one molecule of mdm12 on each side in a pairwise head-to-tail manner, and the SMP-LTD domains of mmm1 and mdm12 generate a continuous hydrophobic tunnel for phospholipid trafficking.

It localises to the mitochondrion outer membrane. It is found in the endoplasmic reticulum membrane. Functionally, component of the ERMES/MDM complex, which serves as a molecular tether to connect the endoplasmic reticulum (ER) and mitochondria. Components of this complex are involved in the control of mitochondrial shape and protein biogenesis, and function in nonvesicular lipid trafficking between the ER and mitochondria. Mdm12 is required for the interaction of the ER-resident membrane protein mmm1 and the outer mitochondrial membrane-resident beta-barrel protein mdm10. The mdm12-mmm1 subcomplex functions in the major beta-barrel assembly pathway that is responsible for biogenesis of all mitochondrial outer membrane beta-barrel proteins, and acts in a late step after the SAM complex. The mdm10-mdm12-mmm1 subcomplex further acts in the TOM40-specific pathway after the action of the mdm12-mmm1 complex. Essential for establishing and maintaining the structure of mitochondria and maintenance of mtDNA nucleoids. The chain is Mitochondrial distribution and morphology protein 12 from Sclerotinia sclerotiorum (strain ATCC 18683 / 1980 / Ss-1) (White mold).